The sequence spans 393 residues: NAD(P)H-quinone oxidoreductase subunit H, chloroplastic (393 aa).

This sequence belongs to the complex I 49 kDa subunit family. In terms of assembly, NDH is composed of at least 16 different subunits, 5 of which are encoded in the nucleus.

It localises to the plastid. Its subcellular location is the chloroplast thylakoid membrane. It catalyses the reaction a plastoquinone + NADH + (n+1) H(+)(in) = a plastoquinol + NAD(+) + n H(+)(out). It carries out the reaction a plastoquinone + NADPH + (n+1) H(+)(in) = a plastoquinol + NADP(+) + n H(+)(out). Functionally, NDH shuttles electrons from NAD(P)H:plastoquinone, via FMN and iron-sulfur (Fe-S) centers, to quinones in the photosynthetic chain and possibly in a chloroplast respiratory chain. The immediate electron acceptor for the enzyme in this species is believed to be plastoquinone. Couples the redox reaction to proton translocation, and thus conserves the redox energy in a proton gradient. The sequence is that of NAD(P)H-quinone oxidoreductase subunit H, chloroplastic from Agrostis stolonifera (Creeping bentgrass).